The primary structure comprises 198 residues: Holliday junction branch migration complex subunit RuvA (198 aa).

The tract at residues 1–63 (MYDYIKGQLT…EDAHLLFGFH (63 aa)) is domain I. The domain II stretch occupies residues 64–142 (TEDEKDVFLK…EAPQETGHTK (79 aa)). The segment at 143 to 147 (ARSNK) is flexible linker. A domain III region spans residues 148–198 (AGNTQLDEAIEALLALGYKAKELKKIRAFFEETSETAEQYIKSALKLLMKG).

The protein belongs to the RuvA family. As to quaternary structure, homotetramer. Forms an RuvA(8)-RuvB(12)-Holliday junction (HJ) complex. HJ DNA is sandwiched between 2 RuvA tetramers; dsDNA enters through RuvA and exits via RuvB. An RuvB hexamer assembles on each DNA strand where it exits the tetramer. Each RuvB hexamer is contacted by two RuvA subunits (via domain III) on 2 adjacent RuvB subunits; this complex drives branch migration. In the full resolvosome a probable DNA-RuvA(4)-RuvB(12)-RuvC(2) complex forms which resolves the HJ.

The protein localises to the cytoplasm. Its function is as follows. The RuvA-RuvB-RuvC complex processes Holliday junction (HJ) DNA during genetic recombination and DNA repair, while the RuvA-RuvB complex plays an important role in the rescue of blocked DNA replication forks via replication fork reversal (RFR). RuvA specifically binds to HJ cruciform DNA, conferring on it an open structure. The RuvB hexamer acts as an ATP-dependent pump, pulling dsDNA into and through the RuvAB complex. HJ branch migration allows RuvC to scan DNA until it finds its consensus sequence, where it cleaves and resolves the cruciform DNA. In Streptococcus pyogenes serotype M2 (strain MGAS10270), this protein is Holliday junction branch migration complex subunit RuvA.